Consider the following 217-residue polypeptide: Large ribosomal subunit protein uL3 (217 aa).

The protein belongs to the universal ribosomal protein uL3 family. In terms of assembly, part of the 50S ribosomal subunit. Forms a cluster with proteins L14 and L19.

Its function is as follows. One of the primary rRNA binding proteins, it binds directly near the 3'-end of the 23S rRNA, where it nucleates assembly of the 50S subunit. The protein is Large ribosomal subunit protein uL3 of Mycolicibacterium paratuberculosis (strain ATCC BAA-968 / K-10) (Mycobacterium paratuberculosis).